Consider the following 997-residue polypeptide: Protein HIR2 (997 aa).

WD repeat units lie at residues 10-48 (GISG…DTAF), 117-152 (VSQS…TRSA), 153-194 (NKKE…VVYH), 274-319 (VHSP…PLFA), and 323-362 (ISDS…LGKT). A disordered region spans residues 408–584 (ADNSSNILST…RKPKEDALGN (177 aa)). Positions 409–446 (DNSSNILSTDTNTNEKNLSTVNTTEPQTNSQSSSYNNK) are enriched in polar residues. Basic and acidic residues predominate over residues 464-480 (SDEKAKNLEARPIEAKS). The segment covering 491-501 (SKSSSVTTSDN) has biased composition (polar residues). Residues 518–538 (TEKKTKPDKKSIKSENGESKV) show a composition bias toward basic and acidic residues. Over residues 539–567 (NKAQNTISPKESNTTDNKSTTPDFKNPSY) the composition is skewed to polar residues. 2 WD repeats span residues 665-706 (LFQD…IIPP) and 708-745 (TIGV…LEFP).

Belongs to the WD repeat HIR1 family.

Its subcellular location is the nucleus. Required for replication-independent chromatin assembly and for the periodic repression of histone gene transcription during the cell cycle. In Candida glabrata (strain ATCC 2001 / BCRC 20586 / JCM 3761 / NBRC 0622 / NRRL Y-65 / CBS 138) (Yeast), this protein is Protein HIR2 (HIR2).